A 213-amino-acid polypeptide reads, in one-letter code: tRNA (guanine-N(7)-)-methyltransferase (213 aa).

S-adenosyl-L-methionine-binding residues include Glu44, Glu69, Asp96, and Asp118. Asp118 is an active-site residue. Lys122 lines the substrate pocket. The segment at 124-129 is interaction with RNA; that stretch reads RHEKRR. Residues Asp154 and 191 to 194 contribute to the substrate site; that span reads TEYE.

Belongs to the class I-like SAM-binding methyltransferase superfamily. TrmB family. Homodimer.

The enzyme catalyses guanosine(46) in tRNA + S-adenosyl-L-methionine = N(7)-methylguanosine(46) in tRNA + S-adenosyl-L-homocysteine. It functions in the pathway tRNA modification; N(7)-methylguanine-tRNA biosynthesis. Functionally, catalyzes the formation of N(7)-methylguanine at position 46 (m7G46) in tRNA. In Bacillus subtilis (strain 168), this protein is tRNA (guanine-N(7)-)-methyltransferase.